We begin with the raw amino-acid sequence, 120 residues long: Ribonuclease P protein component 2 (120 aa).

The protein belongs to the eukaryotic/archaeal RNase P protein component 2 family. As to quaternary structure, consists of a catalytic RNA component and at least 4-5 protein subunits.

It localises to the cytoplasm. The catalysed reaction is Endonucleolytic cleavage of RNA, removing 5'-extranucleotides from tRNA precursor.. Its function is as follows. Part of ribonuclease P, a protein complex that generates mature tRNA molecules by cleaving their 5'-ends. The sequence is that of Ribonuclease P protein component 2 from Thermococcus gammatolerans (strain DSM 15229 / JCM 11827 / EJ3).